A 153-amino-acid chain; its full sequence is Insulin-like growth factor 1 (153 aa).

The b stretch occupies residues 49–77 (GPETLCGAELVDALQFVCGDRGFYFNKPT). Intrachain disulfides connect Cys-54–Cys-96, Cys-66–Cys-109, and Cys-95–Cys-100. Residues 78–89 (GYGSSSRRAPQT) are c. The tract at residues 90–110 (GIVDECCFRSCDLRRLEMYCA) is a. Residues 111–118 (PLKPAKSA) form a d region. Positions 119-153 (RSVRAQRHTDMPKAQKEVHLKNASRGSAGNKNYRM) are cleaved as a propeptide — e peptide. Residues 120 to 153 (SVRAQRHTDMPKAQKEVHLKNASRGSAGNKNYRM) form a disordered region. Over residues 125 to 138 (RHTDMPKAQKEVHL) the composition is skewed to basic and acidic residues. Positions 142–153 (SRGSAGNKNYRM) are enriched in polar residues.

It belongs to the insulin family. In terms of assembly, forms a ternary complex with IGFR1 and ITGAV:ITGB3. Forms a ternary complex with IGFR1 and ITGA6:ITGB4. Forms a ternary complex with IGFBP3 and ALS.

Its subcellular location is the secreted. Functionally, the insulin-like growth factors, isolated from plasma, are structurally and functionally related to insulin but have a much higher growth-promoting activity. May be a physiological regulator of [1-14C]-2-deoxy-D-glucose (2DG) transport and glycogen synthesis in osteoblasts. Stimulates glucose transport in bone-derived osteoblastic (PyMS) cells and is effective at much lower concentrations than insulin, not only regarding glycogen and DNA synthesis but also with regard to enhancing glucose uptake. May play a role in synapse maturation. Ca(2+)-dependent exocytosis of IGF1 is required for sensory perception of smell in the olfactory bulb. Acts as a ligand for IGF1R. Binds to the alpha subunit of IGF1R, leading to the activation of the intrinsic tyrosine kinase activity which autophosphorylates tyrosine residues in the beta subunit thus initiating a cascade of down-stream signaling events leading to activation of the PI3K-AKT/PKB and the Ras-MAPK pathways. Binds to integrins ITGAV:ITGB3 and ITGA6:ITGB4. Its binding to integrins and subsequent ternary complex formation with integrins and IGFR1 are essential for IGF1 signaling. Induces the phosphorylation and activation of IGFR1, MAPK3/ERK1, MAPK1/ERK2 and AKT1. As part of the MAPK/ERK signaling pathway, acts as a negative regulator of apoptosis in cardiomyocytes via promotion of STUB1/CHIP-mediated ubiquitination and degradation of ICER-type isoforms of CREM. In Rhinopithecus roxellana (Golden snub-nosed monkey), this protein is Insulin-like growth factor 1.